A 301-amino-acid chain; its full sequence is Protein FdhE homolog (301 aa).

Belongs to the FdhE family.

The protein resides in the cytoplasm. Necessary for formate dehydrogenase activity. In Shewanella baltica (strain OS185), this protein is Protein FdhE homolog.